A 367-amino-acid chain; its full sequence is tRNA-specific 2-thiouridylase MnmA (367 aa).

ATP-binding positions include 11–18 (GLSGGVDS) and L37. C99 acts as the Nucleophile in catalysis. A disulfide bridge connects residues C99 and C195. Position 123 (G123) interacts with ATP. The interaction with tRNA stretch occupies residues 145–147 (KDQ). The active-site Cysteine persulfide intermediate is the C195. The interaction with tRNA stretch occupies residues 304-305 (RY).

It belongs to the MnmA/TRMU family.

The protein localises to the cytoplasm. The catalysed reaction is S-sulfanyl-L-cysteinyl-[protein] + uridine(34) in tRNA + AH2 + ATP = 2-thiouridine(34) in tRNA + L-cysteinyl-[protein] + A + AMP + diphosphate + H(+). Its function is as follows. Catalyzes the 2-thiolation of uridine at the wobble position (U34) of tRNA, leading to the formation of s(2)U34. The chain is tRNA-specific 2-thiouridylase MnmA from Chlorobium luteolum (strain DSM 273 / BCRC 81028 / 2530) (Pelodictyon luteolum).